The primary structure comprises 408 residues: MITALRGMKDMLPARAKLYAQIIKTCEEVAKNYGYEQILTPHLEETALFKRSVGESSDIVGKEMYQFEDKGGNDVCLRPEGTAGVVRAFIEAKLDRANVTKRCFYHGSMFRYERPQKGRLREFHQFGCECFGEGSVYEDASIILMVSEIFNRLNIKTTLKINSLGDESSMKSYKEKLVKFLDENDDKICEDCKRRKLLNPIRVLDCKIESCQEIYKNAPVITDSLSDEAQADFAKLQEILTANGVKFEIDTKLVRGLDYYCKTAFEFISNEIGSQSAVAGGGRYDRLVEYLGGRASYGVGFAMGVERIMEILGEAGDERDGVYLCALDAANVDFIYNLGSKLRKKYQVEISYEAKKLQKHLQNADNKNAKIFLCVGENEMKENKIWYKNLETKDEKTINLDELEKELG.

It belongs to the class-II aminoacyl-tRNA synthetase family. As to quaternary structure, homodimer.

It is found in the cytoplasm. It catalyses the reaction tRNA(His) + L-histidine + ATP = L-histidyl-tRNA(His) + AMP + diphosphate + H(+). In Campylobacter concisus (strain 13826), this protein is Histidine--tRNA ligase.